The primary structure comprises 612 residues: tRNA uridine 5-carboxymethylaminomethyl modification enzyme MnmG (612 aa).

An FAD-binding site is contributed by 9–14 (GAGHAG). 270–284 (GPLYCPSIEDKVFKF) is an NAD(+) binding site.

The protein belongs to the MnmG family. In terms of assembly, homodimer. Heterotetramer of two MnmE and two MnmG subunits. FAD serves as cofactor.

It is found in the cytoplasm. Its function is as follows. NAD-binding protein involved in the addition of a carboxymethylaminomethyl (cmnm) group at the wobble position (U34) of certain tRNAs, forming tRNA-cmnm(5)s(2)U34. The chain is tRNA uridine 5-carboxymethylaminomethyl modification enzyme MnmG from Mycoplasma genitalium (strain ATCC 33530 / DSM 19775 / NCTC 10195 / G37) (Mycoplasmoides genitalium).